Consider the following 219-residue polypeptide: Large ribosomal subunit protein uL3 (219 aa).

The interval 134-153 is disordered; it reads RASHGNSRSHNVPGSIGMAQ. Q153 carries the post-translational modification N5-methylglutamine.

It belongs to the universal ribosomal protein uL3 family. In terms of assembly, part of the 50S ribosomal subunit. Forms a cluster with proteins L14 and L19. Post-translationally, methylated by PrmB.

Functionally, one of the primary rRNA binding proteins, it binds directly near the 3'-end of the 23S rRNA, where it nucleates assembly of the 50S subunit. The polypeptide is Large ribosomal subunit protein uL3 (Paraburkholderia phytofirmans (strain DSM 17436 / LMG 22146 / PsJN) (Burkholderia phytofirmans)).